We begin with the raw amino-acid sequence, 544 residues long: MAKRIIYNENARRALEKGIDILAESVAVTLGPKGRNVVLEKKFGSPQIINDGVTIAKEIELEDHIENTGVALIRQAASKTNDAAGDGTTTATVLAHAMVKAGLRNVAAGANAITLKKGIDKASDFLVGKIKDMAKPIADSNAIAQVGTISAGNDEEVGKMIADAMDKVGKEGVISLEEGKSMETELEVTEGMRFDKGYISPYFATDTERMEAVLDEPYILLTDKKIGLVQDLVPVLEQIARTGKPLLIIAEDIEKEALATLVVNRLRGVLNVAAVKAPGFGDRRKAMLEDMAVLTNGQLITEDAGLKLENAKLEMLGTARRITINKDTTTIVAEGNEAAVGARCEQIKKQMDETDSTYDKEKLQERLAKLAGGVAVVKVGAATETEMKDKKLRLEDAINATKAAVEEGIVPGGGTTLAHLAPALEEWANGNLSGEELIGANIVAAALTAPLMRIAENAGANGAVVAENVKSRSNNEGYNAANGDYVDMLAAGIVDPAKVTRSGLQNAASIAGMVLTTECIVADLPEKKDAAPAGGGMGGGDFDY.

Residues 29 to 32 (TLGP), 86 to 90 (DGTTT), glycine 413, 479 to 481 (NAA), and aspartate 495 each bind ATP.

Belongs to the chaperonin (HSP60) family. In terms of assembly, forms a cylinder of 14 subunits composed of two heptameric rings stacked back-to-back. Interacts with the co-chaperonin GroES.

It is found in the cytoplasm. The enzyme catalyses ATP + H2O + a folded polypeptide = ADP + phosphate + an unfolded polypeptide.. Its function is as follows. Together with its co-chaperonin GroES, plays an essential role in assisting protein folding. The GroEL-GroES system forms a nano-cage that allows encapsulation of the non-native substrate proteins and provides a physical environment optimized to promote and accelerate protein folding. This is Chaperonin GroEL 1 from Synechococcus sp. (strain CC9902).